The sequence spans 430 residues: Asparagine--tRNA ligase (430 aa).

The protein belongs to the class-II aminoacyl-tRNA synthetase family. In terms of assembly, homodimer.

Its subcellular location is the cytoplasm. It carries out the reaction tRNA(Asn) + L-asparagine + ATP = L-asparaginyl-tRNA(Asn) + AMP + diphosphate + H(+). The chain is Asparagine--tRNA ligase from Staphylococcus aureus (strain bovine RF122 / ET3-1).